Here is a 277-residue protein sequence, read N- to C-terminus: Pantothenate synthetase (277 aa).

26–33 (MGNLHEGH) is an ATP binding site. H33 serves as the catalytic Proton donor. Position 57 (Q57) interacts with (R)-pantoate. Q57 is a binding site for beta-alanine. Residue 144-147 (GKKD) coordinates ATP. Residue Q150 participates in (R)-pantoate binding. Residues V173 and 181–184 (LSSR) each bind ATP.

Belongs to the pantothenate synthetase family. As to quaternary structure, homodimer.

It localises to the cytoplasm. It carries out the reaction (R)-pantoate + beta-alanine + ATP = (R)-pantothenate + AMP + diphosphate + H(+). The protein operates within cofactor biosynthesis; (R)-pantothenate biosynthesis; (R)-pantothenate from (R)-pantoate and beta-alanine: step 1/1. In terms of biological role, catalyzes the condensation of pantoate with beta-alanine in an ATP-dependent reaction via a pantoyl-adenylate intermediate. This chain is Pantothenate synthetase, found in Paraburkholderia xenovorans (strain LB400).